Consider the following 104-residue polypeptide: Large ribosomal subunit protein bL21 (104 aa).

Belongs to the bacterial ribosomal protein bL21 family. Part of the 50S ribosomal subunit. Contacts protein L20.

In terms of biological role, this protein binds to 23S rRNA in the presence of protein L20. The chain is Large ribosomal subunit protein bL21 from Opitutus terrae (strain DSM 11246 / JCM 15787 / PB90-1).